A 412-amino-acid polypeptide reads, in one-letter code: NADH-quinone oxidoreductase subunit D (412 aa).

Belongs to the complex I 49 kDa subunit family. In terms of assembly, NDH-1 is composed of 14 different subunits. Subunits NuoB, C, D, E, F, and G constitute the peripheral sector of the complex.

It localises to the cell inner membrane. It catalyses the reaction a quinone + NADH + 5 H(+)(in) = a quinol + NAD(+) + 4 H(+)(out). In terms of biological role, NDH-1 shuttles electrons from NADH, via FMN and iron-sulfur (Fe-S) centers, to quinones in the respiratory chain. The immediate electron acceptor for the enzyme in this species is believed to be a menaquinone. Couples the redox reaction to proton translocation (for every two electrons transferred, four hydrogen ions are translocated across the cytoplasmic membrane), and thus conserves the redox energy in a proton gradient. The sequence is that of NADH-quinone oxidoreductase subunit D from Flavobacterium johnsoniae (strain ATCC 17061 / DSM 2064 / JCM 8514 / BCRC 14874 / CCUG 350202 / NBRC 14942 / NCIMB 11054 / UW101) (Cytophaga johnsonae).